Here is a 478-residue protein sequence, read N- to C-terminus: Membrane-bound lytic murein transglycosylase F (478 aa).

Residues 1 to 22 (MTRFLFAIILGFLLTACQQVTV) form the signal peptide. The interval 23-257 (EETEYVPHKL…HLNEKYFGHV (235 aa)) is non-LT domain. The segment at 258–478 (KRFDYIDTRA…PGTLSPDKPK (221 aa)) is LT domain. Glu302 is a catalytic residue. The tract at residues 446-478 (SKQQNSDEEEPSDLASEDGPAPVPGTLSPDKPK) is disordered. Residues 451–461 (SDEEEPSDLAS) are compositionally biased toward acidic residues.

In the N-terminal section; belongs to the bacterial solute-binding protein 3 family. This sequence in the C-terminal section; belongs to the transglycosylase Slt family.

The protein resides in the cell outer membrane. The catalysed reaction is Exolytic cleavage of the (1-&gt;4)-beta-glycosidic linkage between N-acetylmuramic acid (MurNAc) and N-acetylglucosamine (GlcNAc) residues in peptidoglycan, from either the reducing or the non-reducing ends of the peptidoglycan chains, with concomitant formation of a 1,6-anhydrobond in the MurNAc residue.. Its function is as follows. Murein-degrading enzyme that degrades murein glycan strands and insoluble, high-molecular weight murein sacculi, with the concomitant formation of a 1,6-anhydromuramoyl product. Lytic transglycosylases (LTs) play an integral role in the metabolism of the peptidoglycan (PG) sacculus. Their lytic action creates space within the PG sacculus to allow for its expansion as well as for the insertion of various structures such as secretion systems and flagella. In Shewanella sp. (strain ANA-3), this protein is Membrane-bound lytic murein transglycosylase F.